Reading from the N-terminus, the 322-residue chain is Peptidase 1 (322 aa).

The N-terminal stretch at 1-18 is a signal peptide; that stretch reads MKFVLAIASLLVLSVVYA. A propeptide spanning residues 19-99 is cleaved from the precursor; it reads YPSEIRTFEE…LKKEFDLDAG (81 aa). C131 and C171 are joined by a disulfide. C134 is an active-site residue. N152 carries N-linked (GlcNAc...) asparagine glycosylation. Residues H270 and N290 contribute to the active site.

This sequence belongs to the peptidase C1 family. Expressed in the gut.

It localises to the secreted. The catalysed reaction is Broad endopeptidase specificity.. Probable thiol protease. The chain is Peptidase 1 from Psoroptes ovis (Sheep scab mite).